The sequence spans 486 residues: UDP-N-acetylmuramoyl-L-alanyl-D-glutamate--2,6-diaminopimelate ligase (486 aa).

Residue serine 26 participates in UDP-N-acetyl-alpha-D-muramoyl-L-alanyl-D-glutamate binding. An ATP-binding site is contributed by 104-110; sequence GTNGKTS. Residues 152–153, serine 179, glutamine 185, and arginine 187 contribute to the UDP-N-acetyl-alpha-D-muramoyl-L-alanyl-D-glutamate site; that span reads TT. The residue at position 219 (lysine 219) is an N6-carboxylysine. Meso-2,6-diaminopimelate-binding positions include arginine 383, 407-410, glycine 455, and glutamate 459; that span reads DNPR. The Meso-diaminopimelate recognition motif motif lies at 407 to 410; sequence DNPR.

Belongs to the MurCDEF family. MurE subfamily. Mg(2+) is required as a cofactor. Post-translationally, carboxylation is probably crucial for Mg(2+) binding and, consequently, for the gamma-phosphate positioning of ATP.

The protein resides in the cytoplasm. It carries out the reaction UDP-N-acetyl-alpha-D-muramoyl-L-alanyl-D-glutamate + meso-2,6-diaminopimelate + ATP = UDP-N-acetyl-alpha-D-muramoyl-L-alanyl-gamma-D-glutamyl-meso-2,6-diaminopimelate + ADP + phosphate + H(+). Its pathway is cell wall biogenesis; peptidoglycan biosynthesis. In terms of biological role, catalyzes the addition of meso-diaminopimelic acid to the nucleotide precursor UDP-N-acetylmuramoyl-L-alanyl-D-glutamate (UMAG) in the biosynthesis of bacterial cell-wall peptidoglycan. The chain is UDP-N-acetylmuramoyl-L-alanyl-D-glutamate--2,6-diaminopimelate ligase from Caulobacter vibrioides (strain ATCC 19089 / CIP 103742 / CB 15) (Caulobacter crescentus).